The following is a 579-amino-acid chain: Transcription factor MTB2 (579 aa).

Residues 373–439 (GGMQIDFTNS…PLNHVEAERQ (67 aa)) are disordered. Positions 382–392 (SRPVVSPVPTV) are enriched in low complexity. Basic and acidic residues-rich tracts occupy residues 393–415 (ESEHSDVEVSCKEKHAGPADERR) and 425–439 (NGREEPLNHVEAERQ). Residues 428–441 (EEPLNHVEAERQRR) form a basic motif; degenerate region. Positions 428 to 477 (EEPLNHVEAERQRREKLNQRFYALRAVVPNISKMDKASLLGDAIAHITDM) constitute a bHLH domain. The interval 442 to 477 (EKLNQRFYALRAVVPNISKMDKASLLGDAIAHITDM) is helix-loop-helix motif.

It localises to the nucleus. Its function is as follows. Transcription factor that negatively regulates jasmonate (JA) signaling. Negatively regulates JA-dependent response to wounding, JA-induced expression of defense genes, JA-dependent responses against herbivorous insects, and JA-dependent resistance against Botrytis cinerea infection. Plays a positive role in resistance against the bacterial pathogen Pseudomonas syringae pv tomato DC3000. The protein is Transcription factor MTB2 of Solanum lycopersicum (Tomato).